Here is a 210-residue protein sequence, read N- to C-terminus: Cell division protein SepF (210 aa).

2 stretches are compositionally biased toward low complexity: residues 36 to 47 and 59 to 69; these read QQQQTPAAVPTQ and RASATTATTAS. 2 disordered regions span residues 36–69 and 182–210; these read QQQQTPAAVPTQEESRSNRRLRNRASATTATTAS and NEMSQTQPRPRVPNSGSQVWQPEQIQMIQ.

Belongs to the SepF family. In terms of assembly, homodimer. Interacts with FtsZ.

It localises to the cytoplasm. In terms of biological role, cell division protein that is part of the divisome complex and is recruited early to the Z-ring. Probably stimulates Z-ring formation, perhaps through the cross-linking of FtsZ protofilaments. Its function overlaps with FtsA. In Trichodesmium erythraeum (strain IMS101), this protein is Cell division protein SepF.